We begin with the raw amino-acid sequence, 283 residues long: Thymidylate synthase (283 aa).

Residue Arg22 participates in dUMP binding. Cys160 acts as the Nucleophile in catalysis. DUMP contacts are provided by residues 180-183 (RSCD), Asn191, and 221-223 (HIY). Asp183 is a (6R)-5,10-methylene-5,6,7,8-tetrahydrofolate binding site. (6R)-5,10-methylene-5,6,7,8-tetrahydrofolate is bound at residue Ser282.

The protein belongs to the thymidylate synthase family. Bacterial-type ThyA subfamily. In terms of assembly, homodimer.

It localises to the cytoplasm. The catalysed reaction is dUMP + (6R)-5,10-methylene-5,6,7,8-tetrahydrofolate = 7,8-dihydrofolate + dTMP. The protein operates within pyrimidine metabolism; dTTP biosynthesis. Its function is as follows. Catalyzes the reductive methylation of 2'-deoxyuridine-5'-monophosphate (dUMP) to 2'-deoxythymidine-5'-monophosphate (dTMP) while utilizing 5,10-methylenetetrahydrofolate (mTHF) as the methyl donor and reductant in the reaction, yielding dihydrofolate (DHF) as a by-product. This enzymatic reaction provides an intracellular de novo source of dTMP, an essential precursor for DNA biosynthesis. The sequence is that of Thymidylate synthase from Shewanella halifaxensis (strain HAW-EB4).